The primary structure comprises 255 residues: Putative transcription factor D5 (255 aa).

In terms of biological role, putative transcription factor required for the expression of viral late genes. The chain is Putative transcription factor D5 from Escherichia coli (Enterobacteria phage T5).